A 266-amino-acid polypeptide reads, in one-letter code: Movement protein (266 aa).

The tract at residues S211 to V244 is disordered. The segment covering P230–V244 has biased composition (basic and acidic residues).

This sequence belongs to the tobamovirus movement protein family. As to quaternary structure, binds to host RBCS at the plasmodesmata; this interaction seems required for viral systemic movement.

It localises to the host cytoplasm. The protein localises to the host cytoskeleton. It is found in the host cell junction. Its subcellular location is the host plasmodesma. In terms of biological role, transports viral genome to neighboring plant cells directly through plasmosdesmata, without any budding. The movement protein allows efficient cell to cell propagation, by bypassing the host cell wall barrier. Forms a ribonucleoprotein complex with viral RNA. Binds microtubules and modulates microtubule stability. Can bind double-stranded DNA. Evades host resistance (R) protein (e.g. tomato ToMV resistance protein TM-2(2), AC Q71BG9) in ToMV/TMV resistant plants. The protein is Movement protein (MP) of Tomato brown rugose fruit virus (isolate TOBRFV/Tomato/Jordan/Tom1-Jo/2015) (ToBRFV).